A 92-amino-acid chain; its full sequence is Small ribosomal subunit protein uS19 (92 aa).

This sequence belongs to the universal ribosomal protein uS19 family.

Functionally, protein S19 forms a complex with S13 that binds strongly to the 16S ribosomal RNA. The chain is Small ribosomal subunit protein uS19 from Malacoplasma penetrans (strain HF-2) (Mycoplasma penetrans).